Reading from the N-terminus, the 740-residue chain is Ion-translocating oxidoreductase complex subunit C (740 aa).

2 consecutive 4Fe-4S ferredoxin-type domains span residues 369-397 and 407-436; these read GEPQ…QQLY and KATT…VQYF. [4Fe-4S] cluster is bound by residues Cys-377, Cys-380, Cys-383, Cys-387, Cys-416, Cys-419, Cys-422, and Cys-426. Residues 598-716 are disordered; that stretch reads AKARKLEQQQ…EPEEQVDPRK (119 aa).

The protein belongs to the 4Fe4S bacterial-type ferredoxin family. RnfC subfamily. In terms of assembly, the complex is composed of six subunits: RsxA, RsxB, RsxC, RsxD, RsxE and RsxG. [4Fe-4S] cluster serves as cofactor.

The protein resides in the cell inner membrane. Part of a membrane-bound complex that couples electron transfer with translocation of ions across the membrane. Required to maintain the reduced state of SoxR. The protein is Ion-translocating oxidoreductase complex subunit C of Shigella flexneri serotype 5b (strain 8401).